The primary structure comprises 421 residues: 4'-demethylrebeccamycin synthase (421 aa).

The protein belongs to the glycosyltransferase 28 family.

It carries out the reaction 4'-demethylrebeccamycin + H2O = dichloroarcyriaflavin A + beta-D-glucose. It participates in alkaloid biosynthesis. Catalyzes the penultimate step in the biosynthesis of rebeccamycin, an indolocarbazole alkaloid that inhibits topoisomerase 1. Has a wide substrate range, including staurosporine aglycone, EJG-III-108A, J-104303, 6-N-methyl-arcyriaflavin and indolo-[2,3-a]-carbazole. This Lentzea aerocolonigenes (Lechevalieria aerocolonigenes) protein is 4'-demethylrebeccamycin synthase (rebG).